The chain runs to 205 residues: uncharacterized protein (205 aa).

The protein belongs to the flavoredoxin family. The cofactor is FMN.

This is an uncharacterized protein from Bacillus subtilis (strain 168).